We begin with the raw amino-acid sequence, 1271 residues long: Probable WRKY transcription factor protein 1 (1271 aa).

The span at 1–12 shows a compositional bias: polar residues; sequence MGAQYSTELNKY. Disordered regions lie at residues 1–138, 204–312, and 370–515; these read MGAQ…NSDR, NNNN…QQNG, and NNNN…RTNS. Positions 9-71 form a coiled coil; that stretch reads LNKYNNNNNN…NNNNNNNNNN (63 aa). Composition is skewed to low complexity over residues 13–103, 116–135, 204–216, and 223–259; these read NNNN…NNNN, INNTNKDTNIPNNSNSNNNN, NNNNNNNNNNENN, and SSTTTTTTTTTTTNNNSNNNNNNNNNNNNNNNNNNNN. The span at 260–274 shows a compositional bias: acidic residues; it reads NEDDEDDYGDDDTIE. Over residues 297–312 the composition is skewed to polar residues; the sequence is SNLNDTNGGNSPQQNG. The stretch at 320-372 forms a coiled coil; it reads KKLLALQQKQLEQEQEQKQQQKQQQQQQQQQQQQQQQQQQQQQKDAIENINNN. Positions 370-388 are enriched in low complexity; that stretch reads NNNNNNKLQPIVKNSVNKT. Residues 413–442 show a composition bias toward acidic residues; it reads NEDEYDASDEYIDDDDDDDEKYDDDDDEYF. A compositionally biased stretch (low complexity) spans 443-458; sequence EGNNNNNYKKNNISNK. Residues 475 to 487 show a composition bias toward basic and acidic residues; sequence EIFKQKKLNHDKN. Over residues 488 to 515 the composition is skewed to polar residues; sequence QSNPKQQLTSHSEFDNSLLNKNQSRTNS. Positions 520 to 574 form a coiled coil; it reads LQIKEENYHQIQQEHGEKQQQQQQQQQQPQQQQQQQQQQQQQQQQEMQVDKEQTE. The span at 578–587 shows a compositional bias: basic and acidic residues; sequence NTNKKEEQKP. Disordered regions lie at residues 578–650 and 667–811; these read NTNK…EGFL and SKKS…NISN. The span at 610-642 shows a compositional bias: low complexity; it reads NNENNNNNNNNNNNNNNNNNNNNNNNNNNYRNN. Residues 672–702 are compositionally biased toward polar residues; sequence NVVPTSPKSNLSDQQPPFSPVQISPQKQSPA. 3 stretches are compositionally biased toward low complexity: residues 703-715, 725-766, and 774-811; these read TTTTTTTTTTPTP, NNNI…NNIN, and NSTQNNNNNNNNNNNSPQNSNTNSNNSNNSNNSNNISN. A coiled-coil region spans residues 766-786; sequence NNEEDEENNSTQNNNNNNNNN. The segment at residues 808–872 is a DNA-binding region (WRKY 1); that stretch reads NISNIVSDGY…YKGEHCHGFP (65 aa). Zn(2+)-binding residues include Cys-839, Cys-844, His-867, and His-869. The disordered stretch occupies residues 890 to 1095; sequence FEGLDGNNNN…RFNGTSESKG (206 aa). Positions 895–918 are enriched in low complexity; it reads GNNNNNNNNNNNNNNYSSNSNSNG. Residues 919–937 show a composition bias toward gly residues; sequence NGNGNGNGNGNGNGNGNGN. Residues 938–956 are compositionally biased toward low complexity; the sequence is SNGNQDQNGNSFNDQNGDS. Residues 957-966 show a composition bias toward polar residues; the sequence is PTQHGQISPM. The span at 967–995 shows a compositional bias: low complexity; that stretch reads NSPKNTIPTTTTTTTSISTYVNTNSTNKK. Residues 998–1010 show a composition bias toward basic and acidic residues; that stretch reads SKQEKKISVKNET. Acidic residues predominate over residues 1011-1021; the sequence is TDDDEFQEDID. Positions 1013–1040 form a coiled coil; that stretch reads DDEFQEDIDQLSNNNNNNNNNNNNNNNN. A compositionally biased stretch (low complexity) spans 1025–1085; it reads NNNNNNNNNN…NNNNNNNNNN (61 aa). The segment at residues 1105–1167 is a DNA-binding region (WRKY 2); sequence SSIDHLDDGF…YRGKHNHDPP (63 aa). Residues Cys-1136, Cys-1141, His-1162, and His-1164 each contribute to the Zn(2+) site. The segment at 1180 to 1210 is disordered; that stretch reads NGLYNNNNNNNNNNNNNNNNNNNNNNINNIN. The span at 1184-1210 shows a compositional bias: low complexity; it reads NNNNNNNNNNNNNNNNNNNNNNINNIN.

The protein belongs to the WRKY group I family.

The protein resides in the nucleus. Its function is as follows. Probable transcription factor. Interacts specifically with the W box (5'-(T)TGAC[CT]-3'), a frequently occurring elicitor-responsive cis-acting element. The polypeptide is Probable WRKY transcription factor protein 1 (wrky1) (Dictyostelium discoideum (Social amoeba)).